Reading from the N-terminus, the 368-residue chain is 3-dehydroquinate synthase (368 aa).

Residues 71–76, 105–109, 129–130, K142, K151, and 169–172 contribute to the NAD(+) site; these read DGEAFK, GVVGD, TT, and TLRT. E184, H247, and H264 together coordinate Zn(2+).

This sequence belongs to the sugar phosphate cyclases superfamily. Dehydroquinate synthase family. It depends on Co(2+) as a cofactor. The cofactor is Zn(2+). NAD(+) is required as a cofactor.

The protein localises to the cytoplasm. It catalyses the reaction 7-phospho-2-dehydro-3-deoxy-D-arabino-heptonate = 3-dehydroquinate + phosphate. The protein operates within metabolic intermediate biosynthesis; chorismate biosynthesis; chorismate from D-erythrose 4-phosphate and phosphoenolpyruvate: step 2/7. In terms of biological role, catalyzes the conversion of 3-deoxy-D-arabino-heptulosonate 7-phosphate (DAHP) to dehydroquinate (DHQ). This Cupriavidus taiwanensis (strain DSM 17343 / BCRC 17206 / CCUG 44338 / CIP 107171 / LMG 19424 / R1) (Ralstonia taiwanensis (strain LMG 19424)) protein is 3-dehydroquinate synthase.